The following is a 141-amino-acid chain: MSVLVYFSSSSENTHRFVKKLCIPAKRIPLIDKKEFQIKSPYILVIPSYNNGILDTAVPHQVTNFLNTLHNKFFLKGVIGSGNKNFGVNFCIAGNIISKKYKVPLLYKFELLGTNKDVINVKNGINKFWKKLNLEKKNQNA.

The protein belongs to the NrdI family.

Functionally, probably involved in ribonucleotide reductase function. This Wigglesworthia glossinidia brevipalpis protein is Protein NrdI.